The following is a 334-amino-acid chain: N-acetyl-gamma-glutamyl-phosphate reductase (334 aa).

Residue Cys142 is part of the active site.

It belongs to the NAGSA dehydrogenase family. Type 1 subfamily.

The protein resides in the cytoplasm. It carries out the reaction N-acetyl-L-glutamate 5-semialdehyde + phosphate + NADP(+) = N-acetyl-L-glutamyl 5-phosphate + NADPH + H(+). The protein operates within amino-acid biosynthesis; L-arginine biosynthesis; N(2)-acetyl-L-ornithine from L-glutamate: step 3/4. Catalyzes the NADPH-dependent reduction of N-acetyl-5-glutamyl phosphate to yield N-acetyl-L-glutamate 5-semialdehyde. This chain is N-acetyl-gamma-glutamyl-phosphate reductase, found in Pelodictyon phaeoclathratiforme (strain DSM 5477 / BU-1).